The chain runs to 399 residues: Centrosomal protein 43 (399 aa).

Positions 70–102 (DGRLVASLVAEFLQFFNLDFTLAVFQPETSTFQ) constitute a LisH domain. Phosphothreonine is present on Thr143. The interval 143 to 311 (TSGEGALDLS…LKESESKRGN (169 aa)) is disordered. Ser152, Ser156, Ser160, and Ser202 each carry phosphoserine. Residues 197 to 209 (NDASHSDTSISSS) are compositionally biased toward low complexity. Over residues 245–256 (PEEDDLEGDSFF) the composition is skewed to acidic residues. The span at 286–302 (APPLKSGLSSLAGAPSL) shows a compositional bias: low complexity. 2 positions are modified to phosphoserine: Ser301 and Ser326. The interval 328–357 (GLGTGEEDDYVDDFNSTSHRSEKSELSIGE) is disordered. A Phosphotyrosine modification is found at Tyr337.

Belongs to the CEP43 family. Homodimer. Part of a ternary complex that contains CEP350, CEP43 and MAPRE1. Interacts directly with CEP350 and MAPRE1. Interacts with CEP19. Interacts (via N-terminus) with CEP350 (via C-terminus).

It is found in the cytoplasm. Its subcellular location is the cytoskeleton. The protein localises to the microtubule organizing center. The protein resides in the centrosome. It localises to the centriole. It is found in the cilium basal body. Its function is as follows. Required for anchoring microtubules to the centrosomes. Required for ciliation. The sequence is that of Centrosomal protein 43 (CEP43) from Bos taurus (Bovine).